The primary structure comprises 2883 residues: Desmoplakin (2883 aa).

Residues 1–21 (MSCNGGSHPRINTLGRMTRAE) are disordered. Positions 1-596 (MSCNGGSHPR…DYMKTIEDLE (596 aa)) are interaction with PKP1, JUP, PKP2. The segment at 1–1068 (MSCNGGSHPR…ANSENCNKNK (1068 aa)) is globular 1. At S22 the chain carries Phosphoserine. A Phosphothreonine modification is found at T59. Residue S65 is modified to Phosphoserine. Y68 is modified (phosphotyrosine). T73 carries the phosphothreonine modification. Phosphoserine is present on residues S177, S178, and S188. Spectrin repeat units follow at residues 190–283 (SGWD…HLRQ) and 284–387 (LQNI…LKEN). The stretch at 388-458 (AAYFQFFEEA…NLVNKSKKIV (71 aa)) is one Spectrin 3a repeat. The region spanning 470–527 (NKPIILRALCDYKQDQKIVHKGDECILKDNNERSKWYVTGPGGVDMLVPSVGLIIPPP) is the SH3 domain. The stretch at 528–557 (NPLAVDLSCKIEQYYEAILALWNQLYINMK) is one Spectrin 3b repeat. 3 Spectrin repeats span residues 558–639 (SLVS…IQLP), 666–781 (VIET…SLCS), and 782–895 (VRAL…DLEK). Positions 1034-1956 (KSLEDLKLKN…LQKEIEKLRQ (923 aa)) form a coiled coil. The central fibrous rod domain stretch occupies residues 1069–1957 (FLDQNLQKYQ…QKEIEKLRQR (889 aa)). S1670, S1720, and S2036 each carry phosphoserine. Residues 1958-2882 (PYGSHRETQT…YSFSSSSIGG (925 aa)) are globular 2. A 4.5 X 38 AA tandem repeats (Domain A) region spans residues 1972–2220 (TVDSSKLVFD…LLLSVQKRSM (249 aa)). 17 Plectin repeats span residues 2021 to 2057 (QPFL…PEST), 2058 to 2095 (VMLL…FDDR), 2096 to 2133 (QQIY…RETG), 2134 to 2171 (MRLL…RDLY), 2175 to 2209 (NDPR…PHTG), 2210 to 2245 (LLLL…PSTV), 2263 to 2300 (KDFL…PGTA), 2301 to 2338 (LELL…IEFK), 2339 to 2376 (EKLL…KGHG), 2377 to 2414 (IRLL…EELS), 2418 to 2452 (SDPS…EETG), 2468 to 2505 (SQKN…YDTF), 2519 to 2556 (TITG…RKFF), 2622 to 2659 (SDPL…SITG), 2660 to 2697 (QRLL…QDMA), 2736 to 2773 (QRFL…GRAA), and 2774 to 2811 (QRLQ…DITG). Phosphoserine occurs at positions 2219, 2221, and 2237. The segment at 2256 to 2458 (DEVGERIKDF…EETGLCLLPL (203 aa)) is 4.5 X 38 AA tandem repeats (Domain B). Q2492 carries the Omega-hydroxyceramide glutamate ester lipid modification. The tract at residues 2621 to 2833 (LSDPLEESSP…GLPSPYNMSA (213 aa)) is 4.5 X 38 AA tandem repeats (Domain C). Phosphoserine occurs at positions 2822 and 2827. Residues 2822–2883 (SKGLPSPYNM…SFSSSSIGGY (62 aa)) form a disordered region. A Phosphotyrosine modification is found at Y2829. A phosphoserine mark is found at S2832 and S2836. The interval 2835–2858 (GSRSGSRSGSRSGSRSGSRSGSRR) is 6 X 4 AA tandem repeats of G-S-R-[SR]. A compositionally biased stretch (low complexity) spans 2835–2858 (GSRSGSRSGSRSGSRSGSRSGSRR). 2 positions are modified to omega-N-methylarginine: R2837 and R2858. S2860 carries the phosphoserine modification. T2864 carries the post-translational modification Phosphothreonine. Over residues 2867-2883 (SSYSYSYSFSSSSIGGY) the composition is skewed to low complexity. Residue S2879 is modified to Phosphoserine.

It belongs to the plakin or cytolinker family. Homodimer. Interacts with COL17A1 (via cytoplasmic region). Interacts with DSC2. Interacts with PKP1. Interacts with PKP2. Interacts weakly with TMEM65. In terms of processing, phosphorylation at Ser-2860 increases association with intermediate filament cytokeratin, potentially facilitating interaction between desmosome junctions and intermediate filament architecture. As to expression, expressed in undifferentiated keratinocytes of the epidermis at birth, expression increases as differentiation proceeds (at protein level). Abundantly expressed in the suprabasal layers and weakly in the basal layers of the outer hair root sheath (at protein level). Expressed at intercalated disks in cardiomyocytes (at protein level).

The protein localises to the cell junction. It localises to the desmosome. It is found in the cell membrane. Its subcellular location is the cytoplasm. Functionally, major high molecular weight protein of desmosomes. Regulates profibrotic gene expression in cardiomyocytes via activation of the MAPK14/p38 MAPK signaling cascade and increase in TGFB1 protein abundance. This Mus musculus (Mouse) protein is Desmoplakin.